A 1118-amino-acid chain; its full sequence is Receptor-type guanylate cyclase gcy-2 (1118 aa).

The first 21 residues, M1–A21, serve as a signal peptide directing secretion. The Extracellular portion of the chain corresponds to Q22 to Y494. N-linked (GlcNAc...) asparagine glycosylation is found at N222, N351, N361, N387, N420, and N452. The chain crosses the membrane as a helical span at residues M495–G515. At C516–N1118 the chain is on the cytoplasmic side. Residues L558–F875 form the Protein kinase domain. Residues T872–E1002 form the Guanylate cyclase domain. Positions W1076–L1103 are disordered.

This sequence belongs to the adenylyl cyclase class-4/guanylyl cyclase family. As to expression, expressed bilaterally in AWA and ASI sensory neurons and in RIA and PVT interneurons.

Its subcellular location is the cell membrane. The catalysed reaction is GTP = 3',5'-cyclic GMP + diphosphate. Its function is as follows. Guanylate cyclase involved in the production of the second messenger cGMP. The chain is Receptor-type guanylate cyclase gcy-2 from Caenorhabditis elegans.